The chain runs to 160 residues: Endoribonuclease YbeY (160 aa).

Residues His125, His129, and His135 each contribute to the Zn(2+) site.

The protein belongs to the endoribonuclease YbeY family. Zn(2+) is required as a cofactor.

Its subcellular location is the cytoplasm. Its function is as follows. Single strand-specific metallo-endoribonuclease involved in late-stage 70S ribosome quality control and in maturation of the 3' terminus of the 16S rRNA. In Leuconostoc mesenteroides subsp. mesenteroides (strain ATCC 8293 / DSM 20343 / BCRC 11652 / CCM 1803 / JCM 6124 / NCDO 523 / NBRC 100496 / NCIMB 8023 / NCTC 12954 / NRRL B-1118 / 37Y), this protein is Endoribonuclease YbeY.